The primary structure comprises 358 residues: MAKELAEKAKEAFLDDDFDVAVDLYSKAIDLDPNCAAFFADRAQANIKIDNFTEAVVDANKAIELEPTLAKAYLRKGTACMKLEEYSTAKAALEKGASVAPNEPKFKKMIDECDLRIAEEEKDLVQPMPPSLPSSSTTPLATEADAPPVPIPAAPAKPMFRHEFYQKPEEAVVTIFAKKVPKENVTVEFGEQILSVVIDVAGEEAYHLQPRLFGKIIPEKCRFEVLSTKVEIRLAKAEIITWASLEYGKGQSVLPKPNVSSALSQRPVYPSSKPAKDWDKLEAEVKKQEKDEKLDGDAAMNKFFSDIYSSADEDMRRAMNKSFAESNGTVLSTNWKEVGTKKVESTPPDGMELKKWEY.

3 TPR repeats span residues 2-35, 37-69, and 70-103; these read AKELAEKAKEAFLDDDFDVAVDLYSKAIDLDPNC, AFFADRAQANIKIDNFTEAVVDANKAIELEPTL, and AKAYLRKGTACMKLEEYSTAKAALEKGASVAPNE. The CS domain maps to 157-246; sequence KPMFRHEFYQ…AEIITWASLE (90 aa). A disordered region spans residues 255–275; that stretch reads PKPNVSSALSQRPVYPSSKPA. The 91-residue stretch at 268–358 folds into the SGS domain; sequence VYPSSKPAKD…DGMELKKWEY (91 aa).

Belongs to the SGT1 family. Interacts with RAR1 and HSP90-2. Interacts (via SGS domain) with HSC70-1 and HSC70-3.

Its subcellular location is the cytoplasm. The protein localises to the nucleus. In terms of biological role, involved in plant innate immunity. Essential for race-specific resistance conferred by multiple R genes, including RPP7, recognizing different oomycete pathogen isolates like avirulent Hyaloperonospora arabidopsidis (downy mildew). Contributes additively with RAR1 to RPP5-dependent resistance. Not required for RPM1, RPS2, RPS4 and RPS5-mediated resistance. Functions as a negative regulator of RPS5 accumulation by assisting its degradation. May be involved in heat shock response by associating with HSC70-1 chaperone. Required for the SCF(TIR1)-mediated degradation of Aux/IAA proteins, but maybe not for SCF(TIR1) assembly or binding to its Aux/IAA substrates. Probably required for SCF-mediated ubiquitination, by coupling HSP90 to SCF complex for ubiquitination of HSP90 client proteins. Required for the coronatine/jasmonic acid-mediated signal transduction pathway. This Arabidopsis thaliana (Mouse-ear cress) protein is Protein SGT1 homolog B.